Reading from the N-terminus, the 130-residue chain is uncharacterized protein (130 aa).

The chain crosses the membrane as a helical span at residues 21–43 (VAVCTVAAEVLAIFTLVCTRVFI).

The protein localises to the membrane. This is an uncharacterized protein from Saccharomyces cerevisiae (strain ATCC 204508 / S288c) (Baker's yeast).